A 269-amino-acid polypeptide reads, in one-letter code: JmjC domain-containing protein 8 (269 aa).

Residues 1–24 (MAAAGRFGLLLLIVLWTMVTVVLP) form the signal peptide. N-linked (GlcNAc...) asparagine glycosylation is found at asparagine 135, asparagine 145, and asparagine 214. The JmjC domain occupies 147 to 269 (TEWAPLFQHY…TSVFISTFLG (123 aa)).

In terms of assembly, oligomer. Dimer. Interacts with PKM; regulates angiogenesis and metabolism. Post-translationally, N-glycosylated.

It localises to the endoplasmic reticulum lumen. Its subcellular location is the cytoplasm. Functions as a positive regulator of TNF-induced NF-kappaB signaling. Regulates angiogenesis and cellular metabolism through interaction with PKM. This is JmjC domain-containing protein 8 from Rattus norvegicus (Rat).